Consider the following 560-residue polypeptide: Membrane protein insertase YidC (560 aa).

A run of 6 helical transmembrane segments spans residues 5–25 (IINL…WQYF), 334–354 (AIDF…MNFF), 357–377 (YVGN…LLMF), 431–451 (LPIL…YVTI), 476–496 (LFGL…WPIL), and 522–542 (FMPL…LIYW).

This sequence belongs to the OXA1/ALB3/YidC family. Type 1 subfamily. As to quaternary structure, interacts with the Sec translocase complex via SecD. Specifically interacts with transmembrane segments of nascent integral membrane proteins during membrane integration.

The protein localises to the cell inner membrane. In terms of biological role, required for the insertion and/or proper folding and/or complex formation of integral membrane proteins into the membrane. Involved in integration of membrane proteins that insert both dependently and independently of the Sec translocase complex, as well as at least some lipoproteins. Aids folding of multispanning membrane proteins. This chain is Membrane protein insertase YidC, found in Rickettsia akari (strain Hartford).